A 494-amino-acid chain; its full sequence is Glutamyl-tRNA(Gln) amidotransferase subunit A (494 aa).

Residues Lys-81 and Ser-156 each act as charge relay system in the active site. Residue Ser-180 is the Acyl-ester intermediate of the active site.

The protein belongs to the amidase family. GatA subfamily. Heterotrimer of A, B and C subunits.

It catalyses the reaction L-glutamyl-tRNA(Gln) + L-glutamine + ATP + H2O = L-glutaminyl-tRNA(Gln) + L-glutamate + ADP + phosphate + H(+). Allows the formation of correctly charged Gln-tRNA(Gln) through the transamidation of misacylated Glu-tRNA(Gln) in organisms which lack glutaminyl-tRNA synthetase. The reaction takes place in the presence of glutamine and ATP through an activated gamma-phospho-Glu-tRNA(Gln). The protein is Glutamyl-tRNA(Gln) amidotransferase subunit A of Mycobacterium bovis (strain ATCC BAA-935 / AF2122/97).